The following is a 119-amino-acid chain: Chymotrypsin inhibitor WCI (119 aa).

Cystine bridges form between cysteine 6–cysteine 55, cysteine 20–cysteine 44, cysteine 29–cysteine 87, cysteine 45–cysteine 105, and cysteine 57–cysteine 116.

Its subcellular location is the secreted. Inhibits bovine, insect and wheat chymotrypsins. Inhibits bovine chymotrypsin with Ki of 0.6 nM. Does not inhibit human or wheat alpha-amylases, bovine pancreatic trypsin, or trypsin-like activity isolated from wheat. The chain is Chymotrypsin inhibitor WCI from Triticum aestivum (Wheat).